The chain runs to 43 residues: ORF7b protein (43 aa).

A helical membrane pass occupies residues 9 to 29 (FYLCFLAFLLFLVLIMLIIFW).

The protein localises to the host Golgi apparatus membrane. The protein resides in the host endosome membrane. This Homo sapiens (Human) protein is ORF7b protein.